A 112-amino-acid chain; its full sequence is Protein Churchill (112 aa).

Zn(2+) is bound by residues Cys2, Cys5, Cys30, Cys33, His59, Cys61, Cys64, His66, His71, Cys88, and Cys91.

This sequence belongs to the Churchill family.

Functionally, transcriptional activator that mediates FGF signaling during neural development. Plays a role in the regulation of cell movement. Does not bind DNA by itself. The sequence is that of Protein Churchill (Churc1) from Mus musculus (Mouse).